The sequence spans 108 residues: Class I hydrophobin hgfII (108 aa).

Positions 1–19 (MFSRIAAVSFLALPLLAAA) are cleaved as a signal peptide. Disulfide bonds link C28-C89, C35-C83, C36-C69, and C90-C103. N-linked (GlcNAc...) asparagine glycosylation is present at N92.

It belongs to the fungal hydrophobin family. Self-assembles to form functional amyloid fibrils called rodlets with a diameter of 15-30 nm. Self-assembly into fibrillar rodlets occurs spontaneously at hydrophobic:hydrophilic interfaces and the rodlets further associate laterally to form amphipathic monolayers. As to expression, highky expressed in hyphae cultured in liquid medium.

Its subcellular location is the secreted. The protein resides in the cell wall. Functionally, aerial growth, conidiation, and dispersal of filamentous fungi in the environment rely upon a capability of their secreting small amphipathic proteins called hydrophobins (HPBs) with low sequence identity. Class I can self-assemble into an outermost layer of rodlet bundles on aerial cell surfaces, conferring cellular hydrophobicity that supports fungal growth, development and dispersal; whereas Class II form highly ordered films at water-air interfaces through intermolecular interactions but contribute nothing to the rodlet structure. HgfII is a class I hydrophobin that is involved in cell surface hydrophobicity and might play a key role during the growth and development of hyphae cultured in liquid medium. This Grifola frondosa (Maitake) protein is Class I hydrophobin hgfII.